Here is a 350-residue protein sequence, read N- to C-terminus: tRNA uridine(34) hydroxylase (350 aa).

Residues 146–240 form the Rhodanese domain; that stretch reads DDPDALFIDM…YARKAREQGL (95 aa). The active-site Cysteine persulfide intermediate is cysteine 200.

It belongs to the TrhO family.

The enzyme catalyses uridine(34) in tRNA + AH2 + O2 = 5-hydroxyuridine(34) in tRNA + A + H2O. In terms of biological role, catalyzes oxygen-dependent 5-hydroxyuridine (ho5U) modification at position 34 in tRNAs, the first step in 5-carboxymethoxyuridine (cmo5U) biosynthesis. May be part of an alternate pathway, which is able to bypass cmo5U biogenesis in a subset of tRNAs under aerobic conditions. This is tRNA uridine(34) hydroxylase from Escherichia coli O9:H4 (strain HS).